The primary structure comprises 355 residues: NADH dehydrogenase-like protein YutJ (355 aa).

Belongs to the NADH dehydrogenase family. The cofactor is FAD.

The sequence is that of NADH dehydrogenase-like protein YutJ (yutJ) from Bacillus subtilis (strain 168).